The chain runs to 131 residues: Small ribosomal subunit protein bS6 (131 aa).

The disordered stretch occupies residues 98-131 (EASPMVKAKDERRERRDDFANETADDAEAGDSEE). Over residues 104–116 (KAKDERRERRDDF) the composition is skewed to basic and acidic residues. The segment covering 120 to 131 (TADDAEAGDSEE) has biased composition (acidic residues).

This sequence belongs to the bacterial ribosomal protein bS6 family.

Its function is as follows. Binds together with bS18 to 16S ribosomal RNA. The protein is Small ribosomal subunit protein bS6 of Salmonella dublin (strain CT_02021853).